The sequence spans 318 residues: Ubiquitin-like domain-containing CTD phosphatase 1 (318 aa).

Ala2 is subject to N-acetylalanine. Residues 3 to 81 form the Ubiquitin-like domain; the sequence is LPIIVKWGGQ…IMMMGTREES (79 aa). Position 117 is an N6-acetyllysine (Lys117). Positions 133 to 294 constitute an FCP1 homology domain; sequence PREGKKLLVL…LKLTQYLKEI (162 aa). Residues Asp143, Asp145, and Asp253 each coordinate Mg(2+).

The cofactor is Mg(2+).

It localises to the nucleus. It carries out the reaction O-phospho-L-seryl-[protein] + H2O = L-seryl-[protein] + phosphate. The catalysed reaction is O-phospho-L-threonyl-[protein] + H2O = L-threonyl-[protein] + phosphate. In terms of biological role, dephosphorylates 26S nuclear proteasomes, thereby decreasing their proteolytic activity. Recruited to the 19S regulatory particle of the 26S proteasome through its interaction with 19S component PSMD2/RPN1. Once recruited, dephosphorylates 19S component PSMC2/RPT1 which impairs PSMC2 ATPase activity and disrupts 26S proteasome assembly. Has also been reported to stimulate the proteolytic activity of the 26S proteasome. The polypeptide is Ubiquitin-like domain-containing CTD phosphatase 1 (UBLCP1) (Pongo abelii (Sumatran orangutan)).